Reading from the N-terminus, the 123-residue chain is Small ribosomal subunit protein uS12 (123 aa).

A 3-methylthioaspartic acid modification is found at D89. The segment at 100-123 is disordered; sequence GSLDTSGVKDRKQGRSKYGTKRPK. A compositionally biased stretch (basic residues) spans 113–123; sequence GRSKYGTKRPK.

Belongs to the universal ribosomal protein uS12 family. As to quaternary structure, part of the 30S ribosomal subunit. Contacts proteins S8 and S17. May interact with IF1 in the 30S initiation complex.

Functionally, with S4 and S5 plays an important role in translational accuracy. In terms of biological role, interacts with and stabilizes bases of the 16S rRNA that are involved in tRNA selection in the A site and with the mRNA backbone. Located at the interface of the 30S and 50S subunits, it traverses the body of the 30S subunit contacting proteins on the other side and probably holding the rRNA structure together. The combined cluster of proteins S8, S12 and S17 appears to hold together the shoulder and platform of the 30S subunit. The chain is Small ribosomal subunit protein uS12 from Ectopseudomonas mendocina (strain ymp) (Pseudomonas mendocina).